The primary structure comprises 215 residues: Ran-specific GTPase-activating protein 1 (215 aa).

Basic and acidic residues-rich tracts occupy residues 1–18 and 26–35; these read MSAE…EEQK and VASKQTEEAK. Residues 1–78 are disordered; that stretch reads MSAEQEKKTQ…ASPEVHFEPI (78 aa). Position 70 is a phosphoserine (S70). The region spanning 74–210 is the RanBD1 domain; sequence HFEPIVKLSA…FEKYQEENAK (137 aa).

It belongs to the RANBP1 family.

The protein localises to the cytoplasm. Its function is as follows. Stimulates the GTPase activity in the presence of RNA1. May potentiate the action of RanGAP1 (RNA1), thus playing the role of a negative regulator. The polypeptide is Ran-specific GTPase-activating protein 1 (sbp1) (Schizosaccharomyces pombe (strain 972 / ATCC 24843) (Fission yeast)).